A 456-amino-acid polypeptide reads, in one-letter code: Gamma-glutamyl phosphate reductase (456 aa).

Belongs to the gamma-glutamyl phosphate reductase family.

The protein localises to the cytoplasm. The catalysed reaction is L-glutamate 5-semialdehyde + phosphate + NADP(+) = L-glutamyl 5-phosphate + NADPH + H(+). The protein operates within amino-acid biosynthesis; L-proline biosynthesis; L-glutamate 5-semialdehyde from L-glutamate: step 2/2. Catalyzes the NADPH-dependent reduction of L-glutamate 5-phosphate into L-glutamate 5-semialdehyde and phosphate. The product spontaneously undergoes cyclization to form 1-pyrroline-5-carboxylate. This Haloquadratum walsbyi (strain DSM 16790 / HBSQ001) protein is Gamma-glutamyl phosphate reductase.